The primary structure comprises 223 residues: Deoxyribose-phosphate aldolase (223 aa).

Asp89 serves as the catalytic Proton donor/acceptor. Residue Lys152 is the Schiff-base intermediate with acetaldehyde of the active site. The active-site Proton donor/acceptor is Lys181.

This sequence belongs to the DeoC/FbaB aldolase family. DeoC type 1 subfamily.

The protein resides in the cytoplasm. The enzyme catalyses 2-deoxy-D-ribose 5-phosphate = D-glyceraldehyde 3-phosphate + acetaldehyde. It participates in carbohydrate degradation; 2-deoxy-D-ribose 1-phosphate degradation; D-glyceraldehyde 3-phosphate and acetaldehyde from 2-deoxy-alpha-D-ribose 1-phosphate: step 2/2. Catalyzes a reversible aldol reaction between acetaldehyde and D-glyceraldehyde 3-phosphate to generate 2-deoxy-D-ribose 5-phosphate. In Bacillus cereus (strain AH187), this protein is Deoxyribose-phosphate aldolase.